Here is a 430-residue protein sequence, read N- to C-terminus: Probable beta-1,3-galactosyl-O-glycosyl-glycoprotein beta-1,6-N-acetylglucosaminyltransferase 7 (430 aa).

Over 1–8 (MSQLRATK) the chain is Cytoplasmic. The chain crosses the membrane as a helical; Signal-anchor for type II membrane protein span at residues 9–25 (SGLVVRAVICIFIFLYL). The Extracellular segment spans residues 26–430 (RNPTPAESEE…QSHFNMRLNR (405 aa)). Disulfide bonds link cysteine 53-cysteine 205, cysteine 139-cysteine 354, cysteine 160-cysteine 187, and cysteine 363-cysteine 395. N-linked (GlcNAc...) asparagine glycosylation is present at asparagine 87. Asparagine 272 is a glycosylation site (N-linked (GlcNAc...) asparagine).

It belongs to the glycosyltransferase 14 family.

It is found in the golgi apparatus membrane. Its pathway is protein modification; protein glycosylation. Probable glycosyltransferase. The protein is Probable beta-1,3-galactosyl-O-glycosyl-glycoprotein beta-1,6-N-acetylglucosaminyltransferase 7 of Homo sapiens (Human).